The sequence spans 271 residues: Formamidopyrimidine-DNA glycosylase (271 aa).

The active-site Schiff-base intermediate with DNA is Pro2. Catalysis depends on Glu3, which acts as the Proton donor. Lys56 (proton donor; for beta-elimination activity) is an active-site residue. DNA is bound by residues His89, Arg107, and Arg151. The FPG-type zinc-finger motif lies at Met236 to Lys270. Catalysis depends on Arg260, which acts as the Proton donor; for delta-elimination activity.

This sequence belongs to the FPG family. Monomer. It depends on Zn(2+) as a cofactor.

It catalyses the reaction Hydrolysis of DNA containing ring-opened 7-methylguanine residues, releasing 2,6-diamino-4-hydroxy-5-(N-methyl)formamidopyrimidine.. It carries out the reaction 2'-deoxyribonucleotide-(2'-deoxyribose 5'-phosphate)-2'-deoxyribonucleotide-DNA = a 3'-end 2'-deoxyribonucleotide-(2,3-dehydro-2,3-deoxyribose 5'-phosphate)-DNA + a 5'-end 5'-phospho-2'-deoxyribonucleoside-DNA + H(+). Its function is as follows. Involved in base excision repair of DNA damaged by oxidation or by mutagenic agents. Acts as a DNA glycosylase that recognizes and removes damaged bases. Has a preference for oxidized purines, such as 7,8-dihydro-8-oxoguanine (8-oxoG). Has AP (apurinic/apyrimidinic) lyase activity and introduces nicks in the DNA strand. Cleaves the DNA backbone by beta-delta elimination to generate a single-strand break at the site of the removed base with both 3'- and 5'-phosphates. In Polaromonas naphthalenivorans (strain CJ2), this protein is Formamidopyrimidine-DNA glycosylase.